Consider the following 288-residue polypeptide: Urease accessory protein UreD (288 aa).

The protein belongs to the UreD family. In terms of assembly, ureD, UreF and UreG form a complex that acts as a GTP-hydrolysis-dependent molecular chaperone, activating the urease apoprotein by helping to assemble the nickel containing metallocenter of UreC. The UreE protein probably delivers the nickel.

Its subcellular location is the cytoplasm. Its function is as follows. Required for maturation of urease via the functional incorporation of the urease nickel metallocenter. The polypeptide is Urease accessory protein UreD (Dechloromonas aromatica (strain RCB)).